The chain runs to 234 residues: Ubiquinone biosynthesis O-methyltransferase (234 aa).

The S-adenosyl-L-methionine site is built by R36, G56, D77, and M125.

Belongs to the methyltransferase superfamily. UbiG/COQ3 family.

The catalysed reaction is a 3-demethylubiquinol + S-adenosyl-L-methionine = a ubiquinol + S-adenosyl-L-homocysteine + H(+). It catalyses the reaction a 3-(all-trans-polyprenyl)benzene-1,2-diol + S-adenosyl-L-methionine = a 2-methoxy-6-(all-trans-polyprenyl)phenol + S-adenosyl-L-homocysteine + H(+). It functions in the pathway cofactor biosynthesis; ubiquinone biosynthesis. Functionally, O-methyltransferase that catalyzes the 2 O-methylation steps in the ubiquinone biosynthetic pathway. This Actinobacillus pleuropneumoniae serotype 7 (strain AP76) protein is Ubiquinone biosynthesis O-methyltransferase.